Reading from the N-terminus, the 367-residue chain is DNA replication and repair protein RecF (367 aa).

Residue 30-37 (GNNGEGKT) participates in ATP binding.

The protein belongs to the RecF family.

It localises to the cytoplasm. The RecF protein is involved in DNA metabolism; it is required for DNA replication and normal SOS inducibility. RecF binds preferentially to single-stranded, linear DNA. It also seems to bind ATP. The protein is DNA replication and repair protein RecF of Leptospira biflexa serovar Patoc (strain Patoc 1 / Ames).